The sequence spans 478 residues: Protein FAM83E (478 aa).

The segment at 1-293 (MAASQLAALE…LYAASCPLPP (293 aa)) is DUF1669. Disordered regions lie at residues 292–334 (PPAP…PLAH), 359–436 (RART…LPPA), and 452–478 (DATFKLQEPRGVRPSDWAPRAGLGGQP). The span at 309–319 (RSPHRVSRRRS) shows a compositional bias: basic residues. Residues 379-388 (RLSQLSGSSD) show a composition bias toward polar residues.

This sequence belongs to the FAM83 family. Directly interacts (via DUF1669) with CSNK1A1, CSNK1A1L, CSNK1D and CSNK1E. May interact with RAF1.

It localises to the cytoplasm. The protein localises to the perinuclear region. In terms of biological role, may play a role in MAPK signaling. This is Protein FAM83E from Homo sapiens (Human).